We begin with the raw amino-acid sequence, 35 residues long: Beta/delta-theraphotoxin-Pre1a (35 aa).

3 disulfide bridges follow: Cys3-Cys18, Cys10-Cys23, and Cys17-Cys30.

It belongs to the neurotoxin 10 (Hwtx-1) family. In terms of tissue distribution, expressed by the venom gland.

Its subcellular location is the secreted. Functionally, gating-modifier toxin that both inhibits the peak current of human Nav1.1/SCN1A, rat Nav1.2/SCN2A, human Nav1.6/SCN8A, and human Nav1.7/SCN9A and concurrently inhibits fast inactivation of human Nav1.1 and rat Nav1.3/SCN3A. The relative rank order potency for Nav modulation is Nav1.3 (inactivation EC(50)=45 nM) &gt; Nav1.7 &gt; Nav1.2 &gt; Nav1.1 (inactivation) &gt; Nav1.1 &gt; Nav1.6 &gt; Nav1.3 (IC(50)=8 uM). The DII and DIV S3-S4 loops of Nav channel voltage sensors are important for the interaction of this toxin with Nav channels but cannot account for its unique subtype selectivity. It is the variability of the S1-S2 loops between NaV channels which contributes substantially to the selectivity profile observed for this toxin, particularly with regards to fast inactivation. This toxin may bind the channel in the resting state. In Psalmopoeus reduncus (Costa Rican orangemouth tarantula), this protein is Beta/delta-theraphotoxin-Pre1a.